Reading from the N-terminus, the 301-residue chain is Probable alpha-L-glutamate ligase (301 aa).

Positions 104–287 (LQLLARKGIG…VAGQLIDYIE (184 aa)) constitute an ATP-grasp domain. Residues lysine 141, 178–179 (EF), aspartate 187, and 211–213 (RSN) each bind ATP. Residues aspartate 248, glutamate 260, and asparagine 262 each coordinate Mg(2+). Positions 248, 260, and 262 each coordinate Mn(2+).

It belongs to the RimK family. The cofactor is Mg(2+). Mn(2+) serves as cofactor.

The chain is Probable alpha-L-glutamate ligase from Maridesulfovibrio salexigens (strain ATCC 14822 / DSM 2638 / NCIMB 8403 / VKM B-1763) (Desulfovibrio salexigens).